Consider the following 260-residue polypeptide: Methylthioribulose-1-phosphate dehydratase (260 aa).

The disordered stretch occupies residues 1–26 (MTPPTTGLPAENTTDDNDHLVQSDDP). Basic and acidic residues predominate over residues 16–26 (DNDHLVQSDDP). Substrate is bound at residue Cys-109. Positions 127 and 129 each coordinate Zn(2+). Glu-154 functions as the Proton donor/acceptor in the catalytic mechanism. Residue His-211 participates in Zn(2+) binding.

Belongs to the aldolase class II family. MtnB subfamily. The cofactor is Zn(2+).

It localises to the cytoplasm. It catalyses the reaction 5-(methylsulfanyl)-D-ribulose 1-phosphate = 5-methylsulfanyl-2,3-dioxopentyl phosphate + H2O. It functions in the pathway amino-acid biosynthesis; L-methionine biosynthesis via salvage pathway; L-methionine from S-methyl-5-thio-alpha-D-ribose 1-phosphate: step 2/6. Its function is as follows. Catalyzes the dehydration of methylthioribulose-1-phosphate (MTRu-1-P) into 2,3-diketo-5-methylthiopentyl-1-phosphate (DK-MTP-1-P). The polypeptide is Methylthioribulose-1-phosphate dehydratase (Podospora anserina (strain S / ATCC MYA-4624 / DSM 980 / FGSC 10383) (Pleurage anserina)).